The chain runs to 144 residues: MKMNTLKPAEGSKQSPKRLGRGIGSGLGKTGGRGHKGQTSRSGGTIRPGFEGGQQPLQRRLPKFGFTSRVGRFSEEVRLSEIDSLGTDIIDLAALKAANIVDQQAKQVKVILSGEITRAVTVKGLKVTKGAQEAIQAAGGKVEE.

The tract at residues 1–60 (MKMNTLKPAEGSKQSPKRLGRGIGSGLGKTGGRGHKGQTSRSGGTIRPGFEGGQQPLQRR) is disordered. Residues 21–31 (RGIGSGLGKTG) show a composition bias toward gly residues.

Belongs to the universal ribosomal protein uL15 family. As to quaternary structure, part of the 50S ribosomal subunit.

In terms of biological role, binds to the 23S rRNA. In Hahella chejuensis (strain KCTC 2396), this protein is Large ribosomal subunit protein uL15.